We begin with the raw amino-acid sequence, 144 residues long: Large-conductance mechanosensitive channel (144 aa).

2 consecutive transmembrane segments (helical) span residues Val21–Ile41 and Gly76–Ile96. The segment at Gln105–Asp144 is disordered. Residues Cys118 to Lys134 show a composition bias toward basic and acidic residues.

It belongs to the MscL family. In terms of assembly, homopentamer.

The protein resides in the cell inner membrane. Channel that opens in response to stretch forces in the membrane lipid bilayer. May participate in the regulation of osmotic pressure changes within the cell. The polypeptide is Large-conductance mechanosensitive channel (Sodalis glossinidius (strain morsitans)).